Here is a 62-residue protein sequence, read N- to C-terminus: Protein A37.5 homolog (62 aa).

It belongs to the orthopoxviruses A37.5 protein family.

In Homo sapiens (Human), this protein is Protein A37.5 homolog (A40_5R).